A 723-amino-acid chain; its full sequence is Probable G-protein coupled receptor 149 (723 aa).

Residues 1 to 31 (MSVMPSNLSLNGTSFFAENHSIMDKPNEQRT) lie on the Extracellular side of the membrane. N-linked (GlcNAc...) asparagine glycans are attached at residues N7, N11, and N19. The chain crosses the membrane as a helical span at residues 32-52 (LNVFLFCSTFIIAFTVLLGSI). The Cytoplasmic portion of the chain corresponds to 53–69 (YSLVSLLKLQNKSTISM). A helical membrane pass occupies residues 70 to 90 (IVTSLSIDDLISIVPVIIFML). Residues 91-106 (TQWSSDALPQPLCTTS) are Extracellular-facing. Residues C103 and C181 are joined by a disulfide bond. Residues 107–127 (ALIYLFQGISSNLKGSLIVSY) form a helical membrane-spanning segment. The Cytoplasmic segment spans residues 128–148 (NFYSINKTETMNCSASKRRVS). The helical transmembrane segment at 149–169 (MVWAILSIWIVSLLICILPLC) threads the bilayer. The Extracellular segment spans residues 170–188 (GWGKYIPTTWGCFTDHASS). The helical transmembrane segment at 189 to 209 (YILFLFIVYSLCFCLLTVLSV) threads the bilayer. Residues 210 to 306 (PLTYQLLCSD…SFTVGFAQKR (97 aa)) are Cytoplasmic-facing. A helical membrane pass occupies residues 307–327 (FSLILALTKVILWLPMMIQMV). The Extracellular portion of the chain corresponds to 328–338 (VQHITGYQSFS). Residues 339 to 359 (FETLSFLLTLLAATVTPVFVL) traverse the membrane as a helical segment. The Cytoplasmic segment spans residues 360–723 (SEHWIHLPCG…RKREEDGNSN (364 aa)). Residues 451–513 (TTDSARPGPA…ERRLSHEEGH (63 aa)) are disordered. The span at 501-513 (EGPERRLSHEEGH) shows a compositional bias: basic and acidic residues.

This sequence belongs to the G-protein coupled receptor 1 family. Specific expression in peripheral nervous system, including nerve growth factor-dependent sensory and sympathetic neurons, as well as enteric neurons.

It is found in the cell membrane. Functionally, orphan receptor. The sequence is that of Probable G-protein coupled receptor 149 (GPR149) from Gallus gallus (Chicken).